The primary structure comprises 391 residues: Cystathionine beta-lyase MetC (391 aa).

An N6-(pyridoxal phosphate)lysine modification is found at Lys196.

The protein belongs to the trans-sulfuration enzymes family. As to quaternary structure, homotetramer. The cofactor is pyridoxal 5'-phosphate.

The catalysed reaction is L,L-cystathionine + H2O = L-homocysteine + pyruvate + NH4(+). It carries out the reaction an S-substituted L-cysteine + H2O = a thiol + pyruvate + NH4(+). It functions in the pathway amino-acid biosynthesis; L-methionine biosynthesis via de novo pathway; L-homocysteine from L-cystathionine: step 1/1. With respect to regulation, cystathionine beta-lyase activity is inhibited by sweat components such as glycine, serine and ammonium sulfate. Inhibited by cystathionine at a concentration higher than 6 mM. Functionally, catalyzes the transformation of cystathionine into homocysteine. Can also catalyze, at low levels, the conversion of cystathionine into methionine and the conversion of methionine into methanethiol. This chain is Cystathionine beta-lyase MetC, found in Staphylococcus haemolyticus (strain JCSC1435).